A 285-amino-acid chain; its full sequence is Putative sugar uptake protein lmo0169 (285 aa).

The next 10 membrane-spanning stretches (helical) occupy residues 5–24, 31–48, 53–71, 84–106, 116–135, 151–173, 178–195, 207–226, 232–254, and 263–282; these read IALI…SKIG, IIGT…VFIF, YTAT…WSLG, VSKT…GVFA, LVLG…LTSY, IITL…WFDI, AILP…LFSI, WLNM…LLFS, IATG…ILFL, and LILV…MIGI.

This sequence belongs to the GRP transporter (TC 2.A.7.5) family.

The protein resides in the cell membrane. In Listeria monocytogenes serovar 1/2a (strain ATCC BAA-679 / EGD-e), this protein is Putative sugar uptake protein lmo0169.